Here is a 754-residue protein sequence, read N- to C-terminus: Disintegrin and metalloproteinase domain-containing protein 7 (754 aa).

Residues 1–18 (MLPGCIFLMILLIPQVKE) form the signal peptide. The propeptide occupies 19–176 (KFILGVEGQQ…NYSCTELNFT (158 aa)). The Extracellular segment spans residues 19-668 (KFILGVEGQQ…ACEETLHVTN (650 aa)). N-linked (GlcNAc...) asparagine glycosylation is found at Asn-84, Asn-167, Asn-174, and Asn-184. One can recognise a Peptidase M12B domain in the interval 199–394 (KYVELFIVAD…YKPTCMLNIP (196 aa)). 4 disulfide bridges follow: Cys-310-Cys-389, Cys-350-Cys-373, Cys-352-Cys-357, and Cys-460-Cys-480. One can recognise a Disintegrin domain in the interval 402-488 (FQFCGNKKLD…ACPKDQFRVN (87 aa)). Residues Asn-584 and Asn-668 are each glycosylated (N-linked (GlcNAc...) asparagine). A helical membrane pass occupies residues 669–689 (ITILVVVLVLVIVGIGVLILL). The Cytoplasmic portion of the chain corresponds to 690 to 754 (VRYRKCIKLK…GIADPNQSAK (65 aa)).

In terms of assembly, interacts with ITM2B in sperm; the interaction increases following capacitation. Interacts with HSPA5 and CANX.

It is found in the membrane. Its function is as follows. Required for normal male fertility via maintenance of epithelial cell morphology in the caput epididymis and subsequently correct epididymis lumen structure required for sperm development. Plays a role in sperm motility, flagella morphology and tyrosine phosphorylation during sperm capacitance. Plays a role in normal expression levels of HSPA5, ITM2B and ADAM2 in sperm both prior to and post-capacitation. This is a non catalytic metalloprotease-like protein. The protein is Disintegrin and metalloproteinase domain-containing protein 7 of Homo sapiens (Human).